The following is a 155-amino-acid chain: Ribonuclease H (155 aa).

Positions Asp-4–Gln-145 constitute an RNase H type-1 domain. Asp-13, Glu-51, Asp-73, and Asp-137 together coordinate Mg(2+).

This sequence belongs to the RNase H family. In terms of assembly, monomer. Requires Mg(2+) as cofactor.

It is found in the cytoplasm. It carries out the reaction Endonucleolytic cleavage to 5'-phosphomonoester.. Its function is as follows. Endonuclease that specifically degrades the RNA of RNA-DNA hybrids. This Rickettsia bellii (strain RML369-C) protein is Ribonuclease H.